The following is a 269-amino-acid chain: Senescence-associated protein 13 (269 aa).

NADP(+) is bound at residue Leu21 to His45. Residue Ser154 coordinates substrate. Tyr167 (proton acceptor) is an active-site residue.

The protein belongs to the short-chain dehydrogenases/reductases (SDR) family. SDR65C subfamily.

Unspecific reductase providing both diastereomeric alcohols from the prochiral ketones. Active on cyclic monoterpenes and small flexible lipophilic carbonyls. No activity with tropinone, nitrogen-containing tropinone analogs, tropine or pseudotropine as substrate. This chain is Senescence-associated protein 13, found in Arabidopsis thaliana (Mouse-ear cress).